A 224-amino-acid chain; its full sequence is Haloacetate dehalogenase H-2 (224 aa).

Catalysis depends on D10, which acts as the Nucleophile.

It belongs to the HAD-like hydrolase superfamily. S-2-haloalkanoic acid dehalogenase family.

It carries out the reaction a haloacetate + H2O = a halide anion + glycolate + H(+). The chain is Haloacetate dehalogenase H-2 (dehH2) from Moraxella sp. (strain B).